Consider the following 100-residue polypeptide: MTAKMAEPLYFRIWSSLNIICLMVTFLNVQLSKTPIVLMPLFIALLKNNRKRETKKQTISVLVQKREEKTKLVLDDANNHNHAFLYHCQYLGQKKHVVIQ.

A helical transmembrane segment spans residues 13–32; the sequence is IWSSLNIICLMVTFLNVQLS.

The protein localises to the mitochondrion membrane. This is an uncharacterized protein from Schizosaccharomyces pombe (strain 972 / ATCC 24843) (Fission yeast).